A 655-amino-acid polypeptide reads, in one-letter code: p-hydroxybenzoic acid efflux pump subunit AaeB (655 aa).

At 1 to 12 (MGIFSIANQHIR) the chain is on the periplasmic side. Residues 13–33 (FAVKLATAIVLALFVGFHFQL) form a helical membrane-spanning segment. The Cytoplasmic portion of the chain corresponds to 34 to 37 (ETPR). The chain crosses the membrane as a helical span at residues 38–58 (WAVLTAAIVAAGTAFAAGGEP). Residues 59 to 68 (YSGAIRYRGF) lie on the Periplasmic side of the membrane. A helical membrane pass occupies residues 69 to 89 (LRIIGTFIGCIAGLVIIIAMI). Residues 90 to 92 (RAP) are Cytoplasmic-facing. Residues 93-113 (LLMILVCCIWAGFCTWISSLV) traverse the membrane as a helical segment. Residues 114-120 (RIENSYA) lie on the Periplasmic side of the membrane. A helical transmembrane segment spans residues 121–141 (WGLAGYTALIIVITIQPEPLL). Over 142 to 151 (TPQFAVERCS) the chain is Cytoplasmic. A helical transmembrane segment spans residues 152–172 (EIVIGIVCAIMADLLFSPRSI). The Periplasmic portion of the chain corresponds to 173–369 (KQEVDRELES…RTTLSCILGT (197 aa)). A helical transmembrane segment spans residues 370-390 (LFWLWTGWTSGSGAMVMIAVV). Residues 391-406 (TSLAMRLPNPRMVAID) are Cytoplasmic-facing. Residues 407 to 427 (FIYGTLAALPLGLLYFLVIIP) form a helical membrane-spanning segment. Over 428–430 (NTQ) the chain is Periplasmic. A helical transmembrane segment spans residues 431 to 451 (QSMLLLCISLAVLGFFLGIEV). Residues 452-458 (QKRRLGS) lie on the Cytoplasmic side of the membrane. The helical transmembrane segment at 459–479 (MGALASTINIIVLDNPMTFHF) threads the bilayer. Topologically, residues 480–481 (SQ) are periplasmic. Residues 482–502 (FLDSALGQIVGCVLAFTVILL) form a helical membrane-spanning segment. The Cytoplasmic segment spans residues 503 to 655 (VRDKSRDRTG…HKYQHALTDS (153 aa)).

This sequence belongs to the aromatic acid exporter ArAE (TC 2.A.85) family.

It localises to the cell inner membrane. In terms of biological role, forms an efflux pump with AaeA. Could function as a metabolic relief valve, allowing to eliminate certain compounds when they accumulate to high levels in the cell. Substrates are p-hydroxybenzoic acid (pHBA), 6-hydroxy-2-naphthoic and 2-hydroxycinnamate. This chain is p-hydroxybenzoic acid efflux pump subunit AaeB, found in Escherichia coli (strain K12).